The sequence spans 60 residues: Large ribosomal subunit protein uL30 (60 aa).

This sequence belongs to the universal ribosomal protein uL30 family. In terms of assembly, part of the 50S ribosomal subunit.

This Saccharopolyspora erythraea (strain ATCC 11635 / DSM 40517 / JCM 4748 / NBRC 13426 / NCIMB 8594 / NRRL 2338) protein is Large ribosomal subunit protein uL30.